We begin with the raw amino-acid sequence, 612 residues long: UvrABC system protein C (612 aa).

The GIY-YIG domain occupies Thr-20 to Ile-98. Residues Ser-208–Leu-243 form the UVR domain.

Belongs to the UvrC family. Interacts with UvrB in an incision complex.

The protein resides in the cytoplasm. Functionally, the UvrABC repair system catalyzes the recognition and processing of DNA lesions. UvrC both incises the 5' and 3' sides of the lesion. The N-terminal half is responsible for the 3' incision and the C-terminal half is responsible for the 5' incision. In Francisella tularensis subsp. tularensis (strain WY96-3418), this protein is UvrABC system protein C.